A 390-amino-acid chain; its full sequence is Methylthioribose-1-phosphate isomerase (390 aa).

Asp263 functions as the Proton donor in the catalytic mechanism.

This sequence belongs to the eIF-2B alpha/beta/delta subunits family. MtnA subfamily.

It localises to the cytoplasm. The protein resides in the nucleus. It catalyses the reaction 5-(methylsulfanyl)-alpha-D-ribose 1-phosphate = 5-(methylsulfanyl)-D-ribulose 1-phosphate. It functions in the pathway amino-acid biosynthesis; L-methionine biosynthesis via salvage pathway; L-methionine from S-methyl-5-thio-alpha-D-ribose 1-phosphate: step 1/6. In terms of biological role, catalyzes the interconversion of methylthioribose-1-phosphate (MTR-1-P) into methylthioribulose-1-phosphate (MTRu-1-P). In Meyerozyma guilliermondii (strain ATCC 6260 / CBS 566 / DSM 6381 / JCM 1539 / NBRC 10279 / NRRL Y-324) (Yeast), this protein is Methylthioribose-1-phosphate isomerase.